The chain runs to 163 residues: Putative 4-hydroxy-4-methyl-2-oxoglutarate aldolase (163 aa).

Substrate contacts are provided by residues 76-79 and Arg98; that span reads GDML. Position 99 (Asp99) interacts with a divalent metal cation.

It belongs to the class II aldolase/RraA-like family. In terms of assembly, homotrimer. A divalent metal cation is required as a cofactor.

It carries out the reaction 4-hydroxy-4-methyl-2-oxoglutarate = 2 pyruvate. The catalysed reaction is oxaloacetate + H(+) = pyruvate + CO2. Its function is as follows. Catalyzes the aldol cleavage of 4-hydroxy-4-methyl-2-oxoglutarate (HMG) into 2 molecules of pyruvate. Also contains a secondary oxaloacetate (OAA) decarboxylase activity due to the common pyruvate enolate transition state formed following C-C bond cleavage in the retro-aldol and decarboxylation reactions. The sequence is that of Putative 4-hydroxy-4-methyl-2-oxoglutarate aldolase from Pseudomonas putida (strain GB-1).